The chain runs to 327 residues: 2-methoxy-6-polyprenyl-1,4-benzoquinol methylase, mitochondrial (327 aa).

A mitochondrion-targeting transit peptide spans 1–49 (MAAPRSCVLWSYCGHGWSRLAGDCRLPGFRRSWLGATLSARSLSQEKRA). Residues Thr117, Asp171, and 199-200 (DA) each bind S-adenosyl-L-methionine.

Belongs to the class I-like SAM-binding methyltransferase superfamily. MenG/UbiE family. In terms of assembly, component of a multi-subunit COQ enzyme complex, composed of at least COQ3, COQ4, COQ5, COQ6, COQ7 and COQ9. Interacts with PYURF; the interaction is direct, stabilizes COQ5 protein and associates PYURF with COQ enzyme complex.

It is found in the mitochondrion inner membrane. The enzyme catalyses 2-methoxy-6-(all-trans-decaprenyl)benzene-1,4-diol + S-adenosyl-L-methionine = 5-methoxy-2-methyl-3-(all-trans-decaprenyl)benzene-1,4-diol + S-adenosyl-L-homocysteine + H(+). It participates in cofactor biosynthesis; ubiquinone biosynthesis. Its function is as follows. Methyltransferase required for the conversion of 2-decaprenyl-6-methoxy-1,4-benzoquinol (DDMQH2) to 2-decaprenyl-3-methyl-6-methoxy-1,4-benzoquinol (DMQH2). The polypeptide is 2-methoxy-6-polyprenyl-1,4-benzoquinol methylase, mitochondrial (Rattus norvegicus (Rat)).